The sequence spans 691 residues: Zinc finger protein 770 (691 aa).

Residue lysine 11 forms a Glycyl lysine isopeptide (Lys-Gly) (interchain with G-Cter in SUMO2) linkage. C2H2-type zinc fingers lie at residues 27–49 (YVCN…YLIH), 55–77 (FECD…QLTH), and 81–103 (FKCS…QQLH). Glycyl lysine isopeptide (Lys-Gly) (interchain with G-Cter in SUMO2) cross-links involve residues lysine 112, lysine 121, and lysine 146. C2H2-type zinc fingers lie at residues 160–182 (HACT…VLIH), 188–210 (FKCV…QLTH), and 216–238 (FQCC…KQIH). Residues 258–277 (PLPNKLNANQGGFENGEIGE) are disordered. Lysine 262 participates in a covalent cross-link: Glycyl lysine isopeptide (Lys-Gly) (interchain with G-Cter in SUMO2). The segment at 294–318 (FQCPKCEKCFESEQILNEHSCFAAR) adopts a C2H2-type 7; degenerate zinc-finger fold. Residues lysine 420 and lysine 437 each participate in a glycyl lysine isopeptide (Lys-Gly) (interchain with G-Cter in SUMO2) cross-link. 4 C2H2-type zinc fingers span residues 475-497 (CPCD…YLIH), 503-525 (FGCN…EQTH), 625-647 (YRCS…YLIH), and 653-675 (FECS…QLTH). Lysine 683 participates in a covalent cross-link: Glycyl lysine isopeptide (Lys-Gly) (interchain with G-Cter in SUMO2).

The protein belongs to the krueppel C2H2-type zinc-finger protein family.

It is found in the nucleus. In terms of biological role, may be involved in transcriptional regulation. In Homo sapiens (Human), this protein is Zinc finger protein 770 (ZNF770).